The sequence spans 213 residues: Orotate phosphoribosyltransferase (213 aa).

Lys26 contributes to the 5-phospho-alpha-D-ribose 1-diphosphate binding site. Orotate is bound at residue 34-35 (FF). Residues 72–73 (YK), Arg98, Lys99, Lys102, His104, and 123–131 (DDVISAGTS) each bind 5-phospho-alpha-D-ribose 1-diphosphate. Residues Ser127 and Arg155 each coordinate orotate.

Belongs to the purine/pyrimidine phosphoribosyltransferase family. PyrE subfamily. As to quaternary structure, homodimer. Mg(2+) serves as cofactor.

The enzyme catalyses orotidine 5'-phosphate + diphosphate = orotate + 5-phospho-alpha-D-ribose 1-diphosphate. It functions in the pathway pyrimidine metabolism; UMP biosynthesis via de novo pathway; UMP from orotate: step 1/2. In terms of biological role, catalyzes the transfer of a ribosyl phosphate group from 5-phosphoribose 1-diphosphate to orotate, leading to the formation of orotidine monophosphate (OMP). In Laribacter hongkongensis (strain HLHK9), this protein is Orotate phosphoribosyltransferase.